The following is a 137-amino-acid chain: Nucleoside diphosphate kinase (137 aa).

ATP contacts are provided by lysine 9, phenylalanine 57, arginine 85, threonine 91, arginine 102, and asparagine 112. Residue histidine 115 is the Pros-phosphohistidine intermediate of the active site.

This sequence belongs to the NDK family. In terms of assembly, homotetramer. It depends on Mg(2+) as a cofactor.

The protein localises to the cytoplasm. It catalyses the reaction a 2'-deoxyribonucleoside 5'-diphosphate + ATP = a 2'-deoxyribonucleoside 5'-triphosphate + ADP. The enzyme catalyses a ribonucleoside 5'-diphosphate + ATP = a ribonucleoside 5'-triphosphate + ADP. Major role in the synthesis of nucleoside triphosphates other than ATP. The ATP gamma phosphate is transferred to the NDP beta phosphate via a ping-pong mechanism, using a phosphorylated active-site intermediate. In Geobacter sp. (strain M21), this protein is Nucleoside diphosphate kinase.